The primary structure comprises 463 residues: Chromosomal replication initiator protein DnaA (463 aa).

The tract at residues 1–83 is domain I, interacts with DnaA modulators; it reads MNTNQIILTD…LQLFQHYNNT (83 aa). A domain II region spans residues 83-124; the sequence is TIKSIDIITKELPGTTQTVIELPTKTFADIGSSELNSENIFS. A domain III, AAA+ region region spans residues 125–343; sequence TLDVRFTFDN…GALNKVIAHS (219 aa). 4 residues coordinate ATP: glycine 171, glycine 173, lysine 174, and threonine 175. A domain IV, binds dsDNA region spans residues 344–463; that stretch reads NFTLKEITLE…INLLMKILQH (120 aa).

It belongs to the DnaA family. Oligomerizes as a right-handed, spiral filament on DNA at oriC.

It localises to the cytoplasm. Plays an essential role in the initiation and regulation of chromosomal replication. ATP-DnaA binds to the origin of replication (oriC) to initiate formation of the DNA replication initiation complex once per cell cycle. Binds the DnaA box (a 9 base pair repeat at the origin) and separates the double-stranded (ds)DNA. Forms a right-handed helical filament on oriC DNA; dsDNA binds to the exterior of the filament while single-stranded (ss)DNA is stabiized in the filament's interior. The ATP-DnaA-oriC complex binds and stabilizes one strand of the AT-rich DNA unwinding element (DUE), permitting loading of DNA polymerase. After initiation quickly degrades to an ADP-DnaA complex that is not apt for DNA replication. Binds acidic phospholipids. This chain is Chromosomal replication initiator protein DnaA, found in Rickettsia akari (strain Hartford).